The primary structure comprises 261 residues: MENKSREDINLSPVSKIEIYSFFDPFSSDCFKLSAILSKLRIEYNQYIRIRHILNPSLKVLTKCQAQSTSNFDNIALAYKAAELQGRVRAERFIHLMQNEIIPKRDIITESMICDCIQNAGIDLEVFKDDLQKSKLTESLKIDLHIAREMEIEQAPSLVFFSEDVHEEGLKVEGLYPYHIYTYIINELMGKPIEKNLPPKLETYIQQQQLVTMEELLTIYEWPEKLLNKELKKLAIQQKIEKLKYPDGDFWKSKMPKIKSK.

The protein belongs to the SpxH family. Interacts with Spx.

The protein localises to the cytoplasm. Its function is as follows. Adapter protein required for efficient degradation of Spx by ClpXP under non-stress conditions. Interaction with Spx stabilizes Spx and exposes the C-terminus of Spx for recognition and proteolysis by ClpXP. This chain is ClpXP adapter protein SpxH, found in Staphylococcus aureus.